Reading from the N-terminus, the 309-residue chain is uncharacterized protein (309 aa).

Residues 1 to 11 show a composition bias toward basic residues; it reads MPGNSRRRGAV. Residues 1 to 69 are disordered; sequence MPGNSRRRGA…PVKRTDETET (69 aa). S-adenosyl-L-methionine is bound by residues Gly-261, Ile-281, and Leu-290.

This sequence belongs to the class IV-like SAM-binding methyltransferase superfamily. RNA methyltransferase TrmH family.

This is an uncharacterized protein from Mycobacterium leprae (strain TN).